Here is a 71-residue protein sequence, read N- to C-terminus: Disintegrin ussuristatin-2 (71 aa).

The Disintegrin domain occupies 1 to 71; sequence EAGEECDCGA…QSADCPRNGF (71 aa). Disulfide bonds link Cys-6-Cys-21, Cys-8-Cys-16, Cys-15-Cys-38, Cys-29-Cys-35, Cys-34-Cys-59, and Cys-47-Cys-66. The Cell attachment site; atypical (KGD) motif lies at 51–53; that stretch reads KGD.

Belongs to the venom metalloproteinase (M12B) family. P-II subfamily. P-IId sub-subfamily. As to quaternary structure, homodimer. Expressed by the venom gland.

The protein localises to the secreted. Functionally, suppress platelet aggregation induced by ADP, collagen, thrombin, and epinephrine (IC(50)=170-330 nM). Also dose-dependently inhibits the adhesion of human melanoma cells to fibrinogen but not to fibronectin. The polypeptide is Disintegrin ussuristatin-2 (Gloydius ussuriensis (Ussuri mamushi)).